A 357-amino-acid polypeptide reads, in one-letter code: MAVEQEHFVHLARPLAPTSMGFTGSAPLTVHIQPQAVFSVIDHAVRRDTRDTQSTRVIGALVGTRSEDGSEVEVRSTFAIPHTENEDQVEVDVEYQKNMLALTLKASPRETLLGWYTTSHELNSFSALIQNFFASPETGTFPHPAVHLTISTEPGAPIATKAYISAPVAVSPERAAESCLFIEVPHKLLFSDAERAALGTATAAAETEARSAPVISDIETLAQSLESVSDLLERVSGFVGEVLDEERDGSHALGQYLMNALSLAPKVSATQIEADFNNHVQDVLMVSYLANTIRTQIDLAQRLATAPLVGGDKEGGEKGKDGEDGGRGGRGGKRGGGGRGGHRGEPREPREPREPAE.

The MPN domain maps to 30-169 (VHIQPQAVFS…TKAYISAPVA (140 aa)). A disordered region spans residues 309 to 357 (VGGDKEGGEKGKDGEDGGRGGRGGKRGGGGRGGHRGEPREPREPREPAE). 2 stretches are compositionally biased toward basic and acidic residues: residues 311–327 (GDKE…DGGR) and 342–357 (HRGE…EPAE).

Belongs to the eIF-3 subunit F family. In terms of assembly, component of the eukaryotic translation initiation factor 3 (eIF-3) complex.

Its subcellular location is the cytoplasm. In terms of biological role, component of the eukaryotic translation initiation factor 3 (eIF-3) complex, which is involved in protein synthesis of a specialized repertoire of mRNAs and, together with other initiation factors, stimulates binding of mRNA and methionyl-tRNAi to the 40S ribosome. The eIF-3 complex specifically targets and initiates translation of a subset of mRNAs involved in cell proliferation. The chain is Eukaryotic translation initiation factor 3 subunit F from Chaetomium globosum (strain ATCC 6205 / CBS 148.51 / DSM 1962 / NBRC 6347 / NRRL 1970) (Soil fungus).